Reading from the N-terminus, the 470-residue chain is Uronate isomerase (470 aa).

Belongs to the metallo-dependent hydrolases superfamily. Uronate isomerase family.

The enzyme catalyses D-glucuronate = D-fructuronate. It catalyses the reaction aldehydo-D-galacturonate = keto-D-tagaturonate. It participates in carbohydrate metabolism; pentose and glucuronate interconversion. The protein is Uronate isomerase of Escherichia coli O157:H7 (strain EC4115 / EHEC).